A 314-amino-acid chain; its full sequence is Homoserine kinase (314 aa).

Residue 96 to 106 (PIGSGLGSSAC) participates in ATP binding.

Belongs to the GHMP kinase family. Homoserine kinase subfamily.

Its subcellular location is the cytoplasm. The enzyme catalyses L-homoserine + ATP = O-phospho-L-homoserine + ADP + H(+). The protein operates within amino-acid biosynthesis; L-threonine biosynthesis; L-threonine from L-aspartate: step 4/5. Catalyzes the ATP-dependent phosphorylation of L-homoserine to L-homoserine phosphate. This chain is Homoserine kinase, found in Haemophilus influenzae (strain PittEE).